We begin with the raw amino-acid sequence, 68 residues long: Riparin-1.6 (68 aa).

An N-terminal signal peptide occupies residues M1–A15. The propeptide occupies Q16–R41. C47 and C53 are disulfide-bonded. Cysteine amide is present on C53. Residues D57–E68 constitute a propeptide that is removed on maturation.

In terms of tissue distribution, expressed by the skin glands.

It is found in the secreted. This is Riparin-1.6 from Crinia riparia (Streambank froglet).